Reading from the N-terminus, the 423-residue chain is Histidine--tRNA ligase (423 aa).

This sequence belongs to the class-II aminoacyl-tRNA synthetase family. In terms of assembly, homodimer.

It is found in the cytoplasm. The catalysed reaction is tRNA(His) + L-histidine + ATP = L-histidyl-tRNA(His) + AMP + diphosphate + H(+). The sequence is that of Histidine--tRNA ligase from Geobacillus sp. (strain WCH70).